Here is a 360-residue protein sequence, read N- to C-terminus: UDP-N-acetylglucosamine--N-acetylmuramyl-(pentapeptide) pyrophosphoryl-undecaprenol N-acetylglucosamine transferase (360 aa).

Residues 12–14, N124, R161, S189, I243, and Q288 each bind UDP-N-acetyl-alpha-D-glucosamine; that span reads TGG.

Belongs to the glycosyltransferase 28 family. MurG subfamily.

It is found in the cell inner membrane. The enzyme catalyses di-trans,octa-cis-undecaprenyl diphospho-N-acetyl-alpha-D-muramoyl-L-alanyl-D-glutamyl-meso-2,6-diaminopimeloyl-D-alanyl-D-alanine + UDP-N-acetyl-alpha-D-glucosamine = di-trans,octa-cis-undecaprenyl diphospho-[N-acetyl-alpha-D-glucosaminyl-(1-&gt;4)]-N-acetyl-alpha-D-muramoyl-L-alanyl-D-glutamyl-meso-2,6-diaminopimeloyl-D-alanyl-D-alanine + UDP + H(+). Its pathway is cell wall biogenesis; peptidoglycan biosynthesis. In terms of biological role, cell wall formation. Catalyzes the transfer of a GlcNAc subunit on undecaprenyl-pyrophosphoryl-MurNAc-pentapeptide (lipid intermediate I) to form undecaprenyl-pyrophosphoryl-MurNAc-(pentapeptide)GlcNAc (lipid intermediate II). The chain is UDP-N-acetylglucosamine--N-acetylmuramyl-(pentapeptide) pyrophosphoryl-undecaprenol N-acetylglucosamine transferase from Acidithiobacillus ferrooxidans (strain ATCC 23270 / DSM 14882 / CIP 104768 / NCIMB 8455) (Ferrobacillus ferrooxidans (strain ATCC 23270)).